The chain runs to 83 residues: Large ribosomal subunit protein uL23 (83 aa).

The protein belongs to the universal ribosomal protein uL23 family. In terms of assembly, part of the 50S ribosomal subunit. Contacts protein L29.

Functionally, binds to 23S rRNA. One of the proteins that surrounds the polypeptide exit tunnel on the outside of the ribosome. The chain is Large ribosomal subunit protein uL23 from Archaeoglobus fulgidus (strain ATCC 49558 / DSM 4304 / JCM 9628 / NBRC 100126 / VC-16).